The sequence spans 1426 residues: Homeobox protein cut-like 2 (1426 aa).

Positions 77–104 (PEPPSAREQNEGTCPTGHTPANGNHLPG) are disordered. Serine 81 carries the post-translational modification Phosphoserine. Residues 131-311 (ITLAARLGEA…IKTELSILRA (181 aa)) are a coiled coil. 6 disordered regions span residues 351 to 419 (ALLA…FPSL), 460 to 488 (KPPSAPAASVPCPEPTGAPEAVDGAGPEE), 599 to 628 (EIESQKGGESKNSPASVSIPNGTASSSTSE), 653 to 676 (ESGPRGRSVPPSPPERPSPATASQ), 743 to 769 (YASVSPSLSSSSSYSGQPNGRAWPRGD), and 904 to 977 (LGQG…SSSQ). The span at 374-395 (PPYPPQLPPPPGPEDPLSPSPA) shows a compositional bias: pro residues. 2 stretches are compositionally biased toward low complexity: residues 397–408 (PLLGPSLGPDGP) and 460–470 (KPPSAPAASVP). The segment at residues 482–569 (DGAGPEEEQL…VLALRTIQVR (88 aa)) is a DNA-binding region (CUT 1). A coiled-coil region spans residues 587 to 655 (DAIKSILEQA…QQALLEMESG (69 aa)). Residues 608–628 (SKNSPASVSIPNGTASSSTSE) show a composition bias toward polar residues. 3 stretches are compositionally biased toward low complexity: residues 743–757 (YASVSPSLSSSSSYS), 910–928 (QAPTQQPSASQASPTEPTS), and 965–976 (SSSLGGKPFSSS). Positions 828-915 (QYELYMYREV…QGQGQAPTQQ (88 aa)) form a DNA-binding region, CUT 2. A DNA-binding region (CUT 3) is located at residues 983–1070 (QEMVAMSPEL…VEKLRDMKKL (88 aa)). The homeobox DNA-binding region spans 1113-1172 (AKKPRVVLAPAEKEALRKAYQLEPYPSQQTIELLSFQLNLKTNTVINWFHNYRSRMRREM). The segment at 1177-1392 (TQDDPDFDPS…AALHPSTKVN (216 aa)) is disordered. Composition is skewed to basic and acidic residues over residues 1233-1245 (APDRALVKIKQEE) and 1260-1274 (DPDRGQDGPKEEHTH). Low complexity predominate over residues 1318-1332 (LSFKSTSESSCCSLE). Residues 1338-1350 (PSVISSPDLTTCV) show a composition bias toward polar residues. Over residues 1351–1364 (SPAPSSSAPISPSL) the composition is skewed to low complexity.

It belongs to the CUT homeobox family. In terms of tissue distribution, restricted to neural tissues. Expressed exclusively in the central and peripheral nervous systems.

The protein resides in the nucleus. Functionally, transcription factor involved in the control of neuronal proliferation and differentiation in the brain. Regulates dendrite development and branching, dendritic spine formation, and synaptogenesis in cortical layers II-III. Binds to DNA in a sequence-specific manner. This is Homeobox protein cut-like 2 (Cux2) from Mus musculus (Mouse).